The primary structure comprises 73 residues: Beta-defensin 50 (73 aa).

The first 23 residues, 1-23, serve as a signal peptide directing secretion; it reads MKTLHLLLLISGLLSVFVKGVGS. Cystine bridges form between C34-C63 and C46-C64.

It belongs to the beta-defensin family.

The protein resides in the secreted. Has bactericidal activity. In Rattus norvegicus (Rat), this protein is Beta-defensin 50 (Defb50).